Reading from the N-terminus, the 238-residue chain is Metal-independent phosphoserine phosphatase (238 aa).

The Tele-phosphohistidine intermediate role is filled by His-32. Glu-107 (proton donor/acceptor) is an active-site residue.

This sequence belongs to the phosphoglycerate mutase family.

It catalyses the reaction O-phospho-L-serine + H2O = L-serine + phosphate. The catalysed reaction is O-phospho-D-serine + H2O = D-serine + phosphate. Functionally, phosphoglycerate mutase-like protein lacking PGM activity, but having a low metal-independent phosphoserine phosphatase activity in vitro. May be involved in serine biosynthesis. This chain is Metal-independent phosphoserine phosphatase (IPSP), found in Arabidopsis thaliana (Mouse-ear cress).